Here is a 305-residue protein sequence, read N- to C-terminus: Tetraspanin-12 (305 aa).

Over 1 to 12 the chain is Cytoplasmic; it reads MAREDSVKCLRC. 2 S-palmitoyl cysteine lipidation sites follow: Cys9 and Cys12. Residues 13–33 form a helical membrane-spanning segment; the sequence is LLYALNLLFWLMSISVLAVSA. At 34-59 the chain is on the extracellular side; sequence WMRDYLNNVLTLTAETRVEEAVILTY. Residues 60–80 traverse the membrane as a helical segment; the sequence is FPVVHPVMIAVCCFLIIVGML. Cys83 is lipidated: S-palmitoyl cysteine. A helical membrane pass occupies residues 90 to 110; it reads LLLLAWYFGTLLVIFCVELAC. The Extracellular segment spans residues 111-224; sequence GVWTYEQEVM…RGTKQLQVLR (114 aa). Residues 225-245 form a helical membrane-spanning segment; it reads FLGISIGVTQILAMILTITLL. At 246-305 the chain is on the cytoplasmic side; sequence WALYYDRREPGTDQMLSLKNDASQHLSCHSVELLKPSLSRIFEHTSMANSFNTHFEMEEL.

The protein belongs to the tetraspanin (TM4SF) family. As to quaternary structure, component of a complex, at least composed of TSPAN12, FZD4 and norrin (NDP). Interacts (when palmitoylated) with ADAM10. Interacts with MMP14/MT1-MMP. Post-translationally, palmitoylated; required for interaction with ADAM10. The precise position of palmitoylated residues is unclear and occurs either on Cys-9, Cys-12 and/or Cys-83.

The protein resides in the cell membrane. Its function is as follows. Regulator of cell surface receptor signal transduction. Plays a central role in retinal vascularization by regulating norrin (NDP) signal transduction. Acts in concert with norrin (NDP) to promote FZD4 multimerization and subsequent activation of FZD4, leading to promote accumulation of beta-catenin (CTNNB1) and stimulate LEF/TCF-mediated transcriptional programs. Suprisingly, it only activates the norrin (NDP)-dependent activation of FZD4, while it does not activate the Wnt-dependent activation of FZD4, suggesting the existence of a Wnt-independent signaling that also promote accumulation the beta-catenin (CTNNB1). Acts as a regulator of membrane proteinases such as ADAM10 and MMP14/MT1-MMP. Activates ADAM10-dependent cleavage activity of amyloid precursor protein (APP). Activates MMP14/MT1-MMP-dependent cleavage activity. This is Tetraspanin-12 (Tspan12) from Rattus norvegicus (Rat).